A 706-amino-acid chain; its full sequence is G2/M phase-specific E3 ubiquitin-protein ligase (706 aa).

A C2HC pre-PHD-type zinc finger spans residues 11 to 51 (NLACVFCRKNDDCPNKYGEKKTKEKWNLTVHYYCLLMSSGI). The segment at 79–128 (LKCCVCKKNGASIGCVAPRCKRSYHFPCGLQRECIFQFTGNFASFCWNHR) adopts a PHD-type 1 zinc-finger fold. Residues 143–193 (PCTICLEFIEPIPSYNILRSPCCKNAWFHRDCLQVQAINAGVFFFRCTICS) form a PHD-type 2; degenerate zinc finger. A PHD-type 3 zinc finger spans residues 237-286 (RCRCKEGRDYNAPDSKWEIKRCQCCGSSGTHLACSSLRSWEQNWECLECR). An HECT domain is found at 371–698 (IWTSALDAFR…IRNTLKLEKE (328 aa)).

The protein resides in the nucleus. It localises to the nucleolus. It is found in the cytoplasm. It carries out the reaction S-ubiquitinyl-[E2 ubiquitin-conjugating enzyme]-L-cysteine + [acceptor protein]-L-lysine = [E2 ubiquitin-conjugating enzyme]-L-cysteine + N(6)-ubiquitinyl-[acceptor protein]-L-lysine.. It participates in protein modification; protein ubiquitination. Functionally, E3 ubiquitin-protein ligase which accepts ubiquitin from an E2 ubiquitin-conjugating enzyme in the form of a thioester and then directly transfers the ubiquitin to targeted substrates. Essential in early embryonic development to prevent apoptotic death. In Macaca fascicularis (Crab-eating macaque), this protein is G2/M phase-specific E3 ubiquitin-protein ligase (G2E3).